The chain runs to 143 residues: Alpha-S2-casein-like B (143 aa).

Residues 1 to 15 (MKFIILTCLLAVALA) form the signal peptide.

This sequence belongs to the alpha-casein family. In terms of tissue distribution, mammary gland specific. Secreted in milk.

The protein resides in the secreted. Its function is as follows. Important role in the capacity of milk to transport calcium phosphate. This is Alpha-S2-casein-like B (Csn1s2b) from Mus musculus (Mouse).